The primary structure comprises 323 residues: Breast cancer metastasis-suppressor 1-like protein (323 aa).

The segment covering 1–15 has biased composition (basic and acidic residues); the sequence is MPVHSREKKENNHDE. Residues 1–56 form a disordered region; the sequence is MPVHSREKKENNHDEMEVDYGENEGSTSEEEETESSSVSEEGDSSEMDDEDCERRR. Residues 16–51 are compositionally biased toward acidic residues; sequence MEVDYGENEGSTSEEEETESSSVSEEGDSSEMDDED. 2 coiled-coil regions span residues 50 to 82 and 147 to 178; these read EDCE…KERL and EKLL…ITSE.

This sequence belongs to the BRMS1 family.

Its subcellular location is the nucleus. Functionally, involved in the histone deacetylase (HDAC1)-dependent transcriptional repression activity. This chain is Breast cancer metastasis-suppressor 1-like protein (BRMS1L), found in Gallus gallus (Chicken).